A 301-amino-acid chain; its full sequence is Ribosomal RNA small subunit methyltransferase A (301 aa).

S-adenosyl-L-methionine contacts are provided by Asn-23, Ile-25, Gly-50, Glu-72, Asp-97, and Asn-149.

The protein belongs to the class I-like SAM-binding methyltransferase superfamily. rRNA adenine N(6)-methyltransferase family. RsmA subfamily.

It localises to the cytoplasm. The catalysed reaction is adenosine(1518)/adenosine(1519) in 16S rRNA + 4 S-adenosyl-L-methionine = N(6)-dimethyladenosine(1518)/N(6)-dimethyladenosine(1519) in 16S rRNA + 4 S-adenosyl-L-homocysteine + 4 H(+). Its function is as follows. Specifically dimethylates two adjacent adenosines (A1518 and A1519) in the loop of a conserved hairpin near the 3'-end of 16S rRNA in the 30S particle. May play a critical role in biogenesis of 30S subunits. The chain is Ribosomal RNA small subunit methyltransferase A from Rickettsia conorii (strain ATCC VR-613 / Malish 7).